Consider the following 332-residue polypeptide: MDSTSSLHGSSLHRPSTEQTRTDFSWDGINLSMEDTTSILPKLKRNSNAYGIGALAKSSFSGISRSMKDHVTKPTAMGQGRVAHMIEWQGWGKAPTIQPQHSHEAVRRDTDAYSDLSDGEKEARFLAGVMEQFAISEATLMAWSSMDGEDMSVNSTQEPLDCNYSDNYQELMESQDALAQAPMDGWPHSYVSQGMYCLGSSDAWEASDQSLIASPATGSYLGPAFDDSQPSLHDMGPSQPASGYSAQEPPPLLGVDTDWASEVGGVELARGPVEEEKRPLAPEEEEDAGCRDLESLSPREDPEMSTALSRKVSDVTSSGVQSFDEEEGDANN.

Residues 1-22 (MDSTSSLHGSSLHRPSTEQTRT) form a disordered region. Phosphoserine is present on Ser47. Positions 95–114 (PTIQPQHSHEAVRRDTDAYS) are disordered. The segment covering 101 to 111 (HSHEAVRRDTD) has biased composition (basic and acidic residues). Phosphoserine is present on residues Ser114 and Ser117. Residues 221-332 (LGPAFDDSQP…FDEEEGDANN (112 aa)) are disordered. 2 stretches are compositionally biased toward basic and acidic residues: residues 272-281 (PVEEEKRPLA) and 288-302 (AGCRDLESLSPREDP). A phosphoserine mark is found at Ser295, Ser297, and Ser313. Phosphothreonine is present on Thr316. Residues Ser317, Ser318, and Ser322 each carry the phosphoserine modification. Over residues 323–332 (FDEEEGDANN) the composition is skewed to acidic residues.

Belongs to the FAM131 family.

The sequence is that of Protein FAM131B (Fam131b) from Mus musculus (Mouse).